A 71-amino-acid polypeptide reads, in one-letter code: Small ribosomal subunit protein bS21 (71 aa).

The protein belongs to the bacterial ribosomal protein bS21 family.

In Alteromonas mediterranea (strain DSM 17117 / CIP 110805 / LMG 28347 / Deep ecotype), this protein is Small ribosomal subunit protein bS21.